The primary structure comprises 578 residues: MIKRYLQFVKPYKYRIFATIIVGIIKFGIPMLIPLLIKYAIDGVINNHALTTDEKVHHLTIAIGIALFIFVIVRPPIEFIRQYLAQWTSNKILYDIRKKLYNHLQALSARFYANNQVGQVISRVINDVEQTKDFILTGLMNIWLDCITIIIALSIMFFLDVKLTLAALFIFPFYILTVYVFFGRLRKLTRERSQALAEVQGFLHERVQGISVVKSFAIEDNEAKNFDKKNANFLTRALKHTRWNAYSFATINTVTDIGPIIVIGVGAYLAISGSITVGTLAAFVGYLELLFGPLRRLVASFTTLTQSFASMDRVFQLIDEDYDIKNGVGAQPIEIKQGRIDIYHVNFQYNDNEAPILKDINLSIEKGETVAFVGMSGGGKSTLINLIPRFYDVTSGQILIDGHNIKDFLTGSLRNQIGLVQQDNILFSDTVKENILLGRPTATDEEVVEVAKVANAHDFIMNLPQGYDTEVGERGVKLSGGQKQRLSIARIFLNNPPILILDEATSALDLESESIIQEALDVLSKDRTTLIVAHRLSTITHADKIVVIENGHIVETGTHRELIAKQGAYEHLYSIQNL.

Residues 1 to 15 lie on the Cytoplasmic side of the membrane; it reads MIKRYLQFVKPYKYR. A helical transmembrane segment spans residues 16-36; it reads IFATIIVGIIKFGIPMLIPLL. Residues 16 to 306 form the ABC transmembrane type-1 domain; it reads IFATIIVGII…LVASFTTLTQ (291 aa). The Extracellular segment spans residues 37–59; the sequence is IKYAIDGVINNHALTTDEKVHHL. The chain crosses the membrane as a helical span at residues 60–80; sequence TIAIGIALFIFVIVRPPIEFI. Over 81–138 the chain is Cytoplasmic; that stretch reads RQYLAQWTSNKILYDIRKKLYNHLQALSARFYANNQVGQVISRVINDVEQTKDFILTG. A helical transmembrane segment spans residues 139–159; sequence LMNIWLDCITIIIALSIMFFL. The Extracellular segment spans residues 160–162; it reads DVK. A helical membrane pass occupies residues 163-183; the sequence is LTLAALFIFPFYILTVYVFFG. Residues 184–242 are Cytoplasmic-facing; the sequence is RLRKLTRERSQALAEVQGFLHERVQGISVVKSFAIEDNEAKNFDKKNANFLTRALKHTR. A helical membrane pass occupies residues 243–262; sequence WNAYSFATINTVTDIGPIIV. The Extracellular segment spans residues 263–267; the sequence is IGVGA. The helical transmembrane segment at 268 to 287 threads the bilayer; that stretch reads YLAISGSITVGTLAAFVGYL. The Cytoplasmic segment spans residues 288–578; the sequence is ELLFGPLRRL…YEHLYSIQNL (291 aa). The ABC transporter domain occupies 340-575; it reads IDIYHVNFQY…QGAYEHLYSI (236 aa). 374 to 381 lines the ATP pocket; it reads GMSGGGKS.

Belongs to the ABC transporter superfamily. Homodimer.

The protein localises to the cell membrane. May be involved in multidrug export. Transmembrane domains (TMD) form a pore in the cell membrane and the ATP-binding domain (NBD) is responsible for energy generation. This Staphylococcus aureus (strain bovine RF122 / ET3-1) protein is Putative multidrug export ATP-binding/permease protein SAB1799c.